We begin with the raw amino-acid sequence, 1012 residues long: Antigenic heat-stable 120 kDa protein (1012 aa).

Disordered regions lie at residues D1 to P73 and G348 to Q396. The span at E12 to E27 shows a compositional bias: basic and acidic residues. Residues S47–S61 show a composition bias toward low complexity. Composition is skewed to polar residues over residues G62–P73, G348–Q373, and P380–Q396.

It is found in the cytoplasm. The sequence is that of Antigenic heat-stable 120 kDa protein (sca4) from Rickettsia slovaca.